A 510-amino-acid chain; its full sequence is Probable ADP-ribosylation factor-binding protein C1F3.05 (510 aa).

Residues 14 to 150 (ATDQFNLEPN…LMAFRGYKFP (137 aa)) enclose the VHS domain. The region spanning 177–301 (LEAHKAKLQE…VIEECSNSDL (125 aa)) is the GAT domain. Positions 391–510 (TNSSLTSILQ…VEQGESHLPL (120 aa)) constitute a GAE domain.

The protein resides in the golgi apparatus. It is found in the trans-Golgi network. Its function is as follows. May play a role in the regulation of membrane traffic through the trans-Golgi network. This chain is Probable ADP-ribosylation factor-binding protein C1F3.05, found in Schizosaccharomyces pombe (strain 972 / ATCC 24843) (Fission yeast).